The following is a 364-amino-acid chain: Nucleoporin SEH1 (364 aa).

6 WD repeats span residues 10-49 (DHKD…EWHC), 55-96 (THSG…SNDK), 111-152 (DSRT…NLSQ), 160-210 (SCKL…RKYA), 217-258 (TVTD…RESA), and 276-315 (SHNS…NWKC).

It belongs to the WD repeat SEC13 family. Component of the Nup107-160 subcomplex of the nuclear pore complex (NPC). The Nup107-160 subcomplex includes NUP160, NUP133, NUP107, NUP98, NUP85, NUP43, NUP37, SEH1 and SEC13. Component of the GATOR2 subcomplex, composed of MIOS, SEC13, SEH1L, WDR24 and WDR59. The GATOR2 complex interacts with CASTOR1 and CASTOR2; the interaction is negatively regulated by arginine. The GATOR2 complex interacts with SESN1, SESN2 and SESN3; the interaction is negatively regulated by amino acids.

It localises to the chromosome. It is found in the centromere. The protein localises to the kinetochore. The protein resides in the nucleus. Its subcellular location is the nuclear pore complex. It localises to the lysosome membrane. Its activity is regulated as follows. The GATOR2 complex is negatively regulated by the upstream amino acid sensors CASTOR1 and SESN2, which sequester the GATOR2 complex in absence of amino acids. In the presence of abundant amino acids, GATOR2 is released from CASTOR1 and SESN2 and activated. Component of the Nup107-160 subcomplex of the nuclear pore complex (NPC). The Nup107-160 subcomplex is required for the assembly of a functional NPC. The Nup107-160 subcomplex is also required for normal kinetochore microtubule attachment, mitotic progression and chromosome segregation. This subunit plays a role in recruitment of the Nup107-160 subcomplex to the kinetochore. Its function is as follows. As a component of the GATOR2 complex, functions as an activator of the amino acid-sensing branch of the mTORC1 signaling pathway. The GATOR2 complex indirectly activates mTORC1 through the inhibition of the GATOR1 subcomplex. GATOR2 probably acts as an E3 ubiquitin-protein ligase toward GATOR1. In the presence of abundant amino acids, the GATOR2 complex mediates ubiquitination of the NPRL2 core component of the GATOR1 complex, leading to GATOR1 inactivation. In the absence of amino acids, GATOR2 is inhibited, activating the GATOR1 complex. The chain is Nucleoporin SEH1 (seh1l) from Danio rerio (Zebrafish).